A 497-amino-acid polypeptide reads, in one-letter code: Ectonucleoside triphosphate diphosphohydrolase 8 (497 aa).

Topologically, residues 1-8 (MGLSWKER) are cytoplasmic. The helical transmembrane segment at 9-29 (VFMALLGVAAASGLTMLVLIL) threads the bilayer. Residues 30-473 (VKAINVLLPA…AQSYSIWTAG (444 aa)) are Extracellular-facing. A disulfide bridge connects residues Cys78 and Cys102. Catalysis depends on Glu168, which acts as the Proton acceptor. Cys245 and Cys294 are disulfide-bonded. A glycan (N-linked (GlcNAc...) asparagine) is linked at Asn306. Cys331 and Cys337 are joined by a disulfide. The N-linked (GlcNAc...) asparagine glycan is linked to Asn365. A disulfide bridge connects residues Cys383 and Cys405. Residues 474-494 (VVFAVLTLVAILGAAAIQIFW) traverse the membrane as a helical segment. At 495–497 (TQD) the chain is on the cytoplasmic side.

Belongs to the GDA1/CD39 NTPase family. The cofactor is Ca(2+). Mg(2+) serves as cofactor. N-glycosylated. As to expression, expressed in liver, jejunum and kidney.

The protein localises to the cell membrane. The catalysed reaction is a ribonucleoside 5'-triphosphate + 2 H2O = a ribonucleoside 5'-phosphate + 2 phosphate + 2 H(+). In terms of biological role, canalicular ectonucleoside NTPDase responsible for the main hepatic NTPDase activity. Ectonucleoside NTPDases catalyze the hydrolysis of gamma- and beta-phosphate residues of nucleotides, playing a central role in concentration of extracellular nucleotides. Has activity toward ATP, ADP, UTP and UDP, but not toward AMP. The polypeptide is Ectonucleoside triphosphate diphosphohydrolase 8 (Entpd8) (Mus musculus (Mouse)).